We begin with the raw amino-acid sequence, 382 residues long: Solvent efflux pump periplasmic linker SrpA (382 aa).

The N-terminal stretch at 1–23 (MRQIRSPRALRVIPLTALMLISG) is a signal peptide. A lipid anchor (N-palmitoyl cysteine) is attached at Cys-24. Cys-24 carries the S-diacylglycerol cysteine lipid modification. Residues 98 to 127 (RTYEAQLRRAEANRTSAQNLARRYETLLKT) adopt a coiled-coil conformation.

This sequence belongs to the membrane fusion protein (MFP) (TC 8.A.1) family.

The protein resides in the cell inner membrane. The periplasmic linker protein component of an organic solvent efflux pump. Involved in export of a number of low log POW compounds including hexane (log POW 3.5), toluene (log POW 2.5) and dimethylphthalate (log POW 2.3). The solvent resistance phenotype has been postulated to depend on the operon expression level. The chain is Solvent efflux pump periplasmic linker SrpA (srpA) from Pseudomonas putida (Arthrobacter siderocapsulatus).